Here is a 451-residue protein sequence, read N- to C-terminus: Interferon regulatory factor 4 (451 aa).

The IRF tryptophan pentad repeat DNA-binding region spans 21-129 (NGKLRQWLID…DPYKVYRIVP (109 aa)). Phosphoserine; by ROCK2 occurs at positions 447 and 448.

Belongs to the IRF family. Interacts with the BATF-JUNB heterodimer. Interacts with BATF (via bZIP domain); the interaction is direct. Interacts with SPIB. Interacts with DEF6. Directly interacts with NLRP3 in the nucleus of Th2 cells; this interaction enhances IRF4 ability to bind to the IL4 promoter and is required for optimal IRF4-dependent IL4 transcription. Interacts with SPI1. In terms of processing, phosphorylation by ROCK2 regulates IL-17 and IL-21 production. Lymphoid cells.

The protein resides in the nucleus. It is found in the cytoplasm. Its function is as follows. Transcriptional activator. Binds to the interferon-stimulated response element (ISRE) of the MHC class I promoter. Binds the immunoglobulin lambda light chain enhancer, together with PU.1. Probably plays a role in ISRE-targeted signal transduction mechanisms specific to lymphoid cells. Involved in CD8(+) dendritic cell differentiation by forming a complex with the BATF-JUNB heterodimer in immune cells, leading to recognition of AICE sequence (5'-TGAnTCA/GAAA-3'), an immune-specific regulatory element, followed by cooperative binding of BATF and IRF4 and activation of genes. The protein is Interferon regulatory factor 4 of Homo sapiens (Human).